Consider the following 317-residue polypeptide: ADP-L-glycero-D-manno-heptose-6-epimerase (317 aa).

NADP(+) contacts are provided by residues 10–11 (FI), 31–32 (DD), lysine 38, lysine 53, 75–79 (QGACS), and asparagine 92. Tyrosine 139 functions as the Proton acceptor in the catalytic mechanism. Lysine 143 contacts NADP(+). Position 166 (asparagine 166) interacts with substrate. The NADP(+) site is built by valine 167 and lysine 175. The active-site Proton acceptor is the lysine 175. Substrate contacts are provided by residues glycine 177, histidine 184, 198–201 (FEGV), arginine 211, and tyrosine 275.

The protein belongs to the NAD(P)-dependent epimerase/dehydratase family. HldD subfamily. As to quaternary structure, homopentamer. It depends on NADP(+) as a cofactor.

The catalysed reaction is ADP-D-glycero-beta-D-manno-heptose = ADP-L-glycero-beta-D-manno-heptose. The protein operates within nucleotide-sugar biosynthesis; ADP-L-glycero-beta-D-manno-heptose biosynthesis; ADP-L-glycero-beta-D-manno-heptose from D-glycero-beta-D-manno-heptose 7-phosphate: step 4/4. Its function is as follows. Catalyzes the interconversion between ADP-D-glycero-beta-D-manno-heptose and ADP-L-glycero-beta-D-manno-heptose via an epimerization at carbon 6 of the heptose. The protein is ADP-L-glycero-D-manno-heptose-6-epimerase of Shewanella piezotolerans (strain WP3 / JCM 13877).